The following is a 565-amino-acid chain: Sulfite reductase [NADPH] hemoprotein beta-component (565 aa).

Residues Cys429, Cys435, Cys474, and Cys478 each coordinate [4Fe-4S] cluster. Cys478 contributes to the siroheme binding site.

The protein belongs to the nitrite and sulfite reductase 4Fe-4S domain family. As to quaternary structure, alpha(8)-beta(8). The alpha component is a flavoprotein, the beta component is a hemoprotein. It depends on siroheme as a cofactor. [4Fe-4S] cluster serves as cofactor.

The enzyme catalyses hydrogen sulfide + 3 NADP(+) + 3 H2O = sulfite + 3 NADPH + 4 H(+). It participates in sulfur metabolism; hydrogen sulfide biosynthesis; hydrogen sulfide from sulfite (NADPH route): step 1/1. In terms of biological role, component of the sulfite reductase complex that catalyzes the 6-electron reduction of sulfite to sulfide. This is one of several activities required for the biosynthesis of L-cysteine from sulfate. The protein is Sulfite reductase [NADPH] hemoprotein beta-component of Shewanella sp. (strain W3-18-1).